The primary structure comprises 553 residues: Undecaprenyl phosphate-alpha-4-amino-4-deoxy-L-arabinose arabinosyl transferase (553 aa).

A run of 12 helical transmembrane segments spans residues 8–28, 83–103, 111–131, 132–152, 176–196, 204–224, 255–275, 288–308, 317–337, 350–370, 380–400, and 407–427; these read LVLL…RALW, VRFG…WLAF, VAVL…VGTY, AVLD…FWLG, VMTK…PWVI, VLLF…PWAL, APFW…VALL, IESG…FFSI, ILPC…QLVA, TVFG…WGIA, VLKV…GYLT, and LWQW…GMIP.

It belongs to the glycosyltransferase 83 family.

The protein localises to the cell inner membrane. It carries out the reaction 4-amino-4-deoxy-alpha-L-arabinopyranosyl di-trans,octa-cis-undecaprenyl phosphate + lipid IVA = lipid IIA + di-trans,octa-cis-undecaprenyl phosphate.. Its pathway is lipopolysaccharide metabolism; 4-amino-4-deoxy-beta-L-arabinose-lipid A biosynthesis. Catalyzes the transfer of the L-Ara4N moiety of the glycolipid undecaprenyl phosphate-alpha-L-Ara4N to lipid A. The modified arabinose is attached to lipid A and is required for resistance to polymyxin and cationic antimicrobial peptides. The protein is Undecaprenyl phosphate-alpha-4-amino-4-deoxy-L-arabinose arabinosyl transferase of Enterobacter sp. (strain 638).